Reading from the N-terminus, the 191-residue chain is Protein HP-20 homolog (191 aa).

An N-terminal signal peptide occupies residues 1–16 (MADLRILVSIILMTNA). The region spanning 22–58 (GCTGPPGPPGHPGPPGIRGPPGIRGIPGLPGPPGTPG) is the Collagen-like domain. The interval 22-61 (GCTGPPGPPGHPGPPGIRGPPGIRGIPGLPGPPGTPGPSV) is disordered. The segment covering 26–39 (PPGPPGHPGPPGIR) has biased composition (pro residues). One can recognise a C1q domain in the interval 64-191 (PCHRQSAFTV…VTIYFSGFLT (128 aa)).

Its subcellular location is the secreted. The sequence is that of Protein HP-20 homolog from Bos taurus (Bovine).